The chain runs to 459 residues: Phosphomethylpyrimidine synthase (459 aa).

Residues Asn80, Met109, Tyr139, His175, 195–197 (SRG), 236–239 (DSLR), and Glu275 each bind substrate. His279 contacts Zn(2+). Tyr302 contacts substrate. His343 is a Zn(2+) binding site. [4Fe-4S] cluster is bound by residues Cys423, Cys426, and Cys431.

It belongs to the ThiC family. It depends on [4Fe-4S] cluster as a cofactor.

The enzyme catalyses 5-amino-1-(5-phospho-beta-D-ribosyl)imidazole + S-adenosyl-L-methionine = 4-amino-2-methyl-5-(phosphooxymethyl)pyrimidine + CO + 5'-deoxyadenosine + formate + L-methionine + 3 H(+). It functions in the pathway cofactor biosynthesis; thiamine diphosphate biosynthesis. Catalyzes the synthesis of the hydroxymethylpyrimidine phosphate (HMP-P) moiety of thiamine from aminoimidazole ribotide (AIR) in a radical S-adenosyl-L-methionine (SAM)-dependent reaction. The protein is Phosphomethylpyrimidine synthase of Prochlorococcus marinus (strain MIT 9211).